Consider the following 160-residue polypeptide: SsrA-binding protein (160 aa).

Belongs to the SmpB family.

It is found in the cytoplasm. Required for rescue of stalled ribosomes mediated by trans-translation. Binds to transfer-messenger RNA (tmRNA), required for stable association of tmRNA with ribosomes. tmRNA and SmpB together mimic tRNA shape, replacing the anticodon stem-loop with SmpB. tmRNA is encoded by the ssrA gene; the 2 termini fold to resemble tRNA(Ala) and it encodes a 'tag peptide', a short internal open reading frame. During trans-translation Ala-aminoacylated tmRNA acts like a tRNA, entering the A-site of stalled ribosomes, displacing the stalled mRNA. The ribosome then switches to translate the ORF on the tmRNA; the nascent peptide is terminated with the 'tag peptide' encoded by the tmRNA and targeted for degradation. The ribosome is freed to recommence translation, which seems to be the essential function of trans-translation. The protein is SsrA-binding protein of Salmonella agona (strain SL483).